Here is a 1940-residue protein sequence, read N- to C-terminus: Myosin-3 (1940 aa).

The 50-residue stretch at 33–82 (DAKTYCFVVDSKEEYVKGKIKSSQDGKVTVETEDSRTLVVKPEDVYAMNP) folds into the Myosin N-terminal SH3-like domain. A Myosin motor domain is found at 86–779 (DKIEDMAMLT…LLGTLEEMRD (694 aa)). The residue at position 130 (K130) is an N6,N6,N6-trimethyllysine. Residue 179–186 (GESGAGKT) coordinates ATP. 2 actin-binding regions span residues 656–678 (LNKL…IPNE) and 758–772 (KFGH…GLLG). An IQ domain is found at 782–811 (LAKLITRTQAVCRGFLMRVEFQKMMQRRES). Positions 841 to 1928 (LKSAETEKEM…NKLRAKTRDF (1088 aa)) form a coiled coil. Residues 1260–1289 (ARGKNEEMQRSLSELTTQKSRLQTEAGELS) are disordered. The segment covering 1269–1282 (RSLSELTTQKSRLQ) has biased composition (polar residues).

The protein belongs to the TRAFAC class myosin-kinesin ATPase superfamily. Myosin family. As to quaternary structure, muscle myosin is a hexameric protein that consists of 2 heavy chain subunits (MHC), 2 alkali light chain subunits (MLC) and 2 regulatory light chain subunits (MLC-2).

Its subcellular location is the cytoplasm. It is found in the myofibril. Functionally, muscle contraction. This chain is Myosin-3 (Myh3), found in Mus musculus (Mouse).